Reading from the N-terminus, the 191-residue chain is dCTP deaminase, dUMP-forming (191 aa).

DCTP contacts are provided by residues 101 to 106 (KSSLGR), Asp119, 127 to 129 (TLE), Gln148, Tyr162, and Gln174. Glu129 acts as the Proton donor/acceptor in catalysis. The tract at residues 163 to 191 (GSPVYGSRYQGQRGPTPSRSWQNFHRTKI) is disordered. The span at 171–191 (YQGQRGPTPSRSWQNFHRTKI) shows a compositional bias: polar residues.

Belongs to the dCTP deaminase family. Homotrimer.

It carries out the reaction dCTP + 2 H2O = dUMP + NH4(+) + diphosphate. It participates in pyrimidine metabolism; dUMP biosynthesis; dUMP from dCTP: step 1/1. Its function is as follows. Bifunctional enzyme that catalyzes both the deamination of dCTP to dUTP and the hydrolysis of dUTP to dUMP without releasing the toxic dUTP intermediate. In Acidothermus cellulolyticus (strain ATCC 43068 / DSM 8971 / 11B), this protein is dCTP deaminase, dUMP-forming.